A 242-amino-acid chain; its full sequence is Ubiquinone biosynthesis O-methyltransferase (242 aa).

Residues Arg44, Gly64, Asp85, and Met129 each contribute to the S-adenosyl-L-methionine site.

It belongs to the methyltransferase superfamily. UbiG/COQ3 family.

The enzyme catalyses a 3-demethylubiquinol + S-adenosyl-L-methionine = a ubiquinol + S-adenosyl-L-homocysteine + H(+). The catalysed reaction is a 3-(all-trans-polyprenyl)benzene-1,2-diol + S-adenosyl-L-methionine = a 2-methoxy-6-(all-trans-polyprenyl)phenol + S-adenosyl-L-homocysteine + H(+). It participates in cofactor biosynthesis; ubiquinone biosynthesis. O-methyltransferase that catalyzes the 2 O-methylation steps in the ubiquinone biosynthetic pathway. The chain is Ubiquinone biosynthesis O-methyltransferase from Salmonella typhi.